Reading from the N-terminus, the 132-residue chain is AP-2 complex subunit sigma (132 aa).

It belongs to the adaptor complexes small subunit family. Adaptor protein complex 2 (AP-2) is a heterotetramer composed of two large adaptins (alpha-type and beta-type subunits), a medium adaptin (mu-type subunit AP50) and a small adaptin (sigma-type subunit AP17). As to expression, widely expressed in the embryo, endosperm, leaf and root.

Its subcellular location is the cell membrane. The protein localises to the membrane. It is found in the coated pit. In terms of biological role, component of the adaptor complexes which link clathrin to receptors in coated vesicles. Clathrin-associated protein complexes are believed to interact with the cytoplasmic tails of membrane proteins, leading to their selection and concentration. AP2S1/AP17 is a subunit of the plasma membrane adaptor. The complex binds polyphosphoinositides. The protein is AP-2 complex subunit sigma (AP-17) of Zea mays (Maize).